An 804-amino-acid chain; its full sequence is Phenylalanine--tRNA ligase beta subunit (804 aa).

The tRNA-binding domain maps to 38-148 (RSSLKGFVIA…EDAPIGGLFA (111 aa)). The 76-residue stretch at 401–476 (PEIKQIAFPF…RIYGLDKIEP (76 aa)) folds into the B5 domain. 4 residues coordinate Mg(2+): D454, D460, E463, and E464. An FDX-ACB domain is found at 710-803 (SPFQMVRRDF…VTKATGAYLR (94 aa)).

This sequence belongs to the phenylalanyl-tRNA synthetase beta subunit family. Type 1 subfamily. In terms of assembly, tetramer of two alpha and two beta subunits. Mg(2+) serves as cofactor.

The protein localises to the cytoplasm. The catalysed reaction is tRNA(Phe) + L-phenylalanine + ATP = L-phenylalanyl-tRNA(Phe) + AMP + diphosphate + H(+). This Bartonella quintana (strain Toulouse) (Rochalimaea quintana) protein is Phenylalanine--tRNA ligase beta subunit.